Here is a 240-residue protein sequence, read N- to C-terminus: Pyridoxine 5'-phosphate synthase (240 aa).

A 3-amino-2-oxopropyl phosphate-binding site is contributed by Asn-6. 8–9 (DH) serves as a coordination point for 1-deoxy-D-xylulose 5-phosphate. Arg-17 lines the 3-amino-2-oxopropyl phosphate pocket. His-42 serves as the catalytic Proton acceptor. 1-deoxy-D-xylulose 5-phosphate contacts are provided by Arg-44 and His-49. The Proton acceptor role is filled by Glu-69. A 1-deoxy-D-xylulose 5-phosphate-binding site is contributed by Thr-99. The Proton donor role is filled by His-190. 3-amino-2-oxopropyl phosphate-binding positions include Gly-191 and 212-213 (GH).

The protein belongs to the PNP synthase family. As to quaternary structure, homooctamer; tetramer of dimers.

The protein localises to the cytoplasm. The enzyme catalyses 3-amino-2-oxopropyl phosphate + 1-deoxy-D-xylulose 5-phosphate = pyridoxine 5'-phosphate + phosphate + 2 H2O + H(+). The protein operates within cofactor biosynthesis; pyridoxine 5'-phosphate biosynthesis; pyridoxine 5'-phosphate from D-erythrose 4-phosphate: step 5/5. In terms of biological role, catalyzes the complicated ring closure reaction between the two acyclic compounds 1-deoxy-D-xylulose-5-phosphate (DXP) and 3-amino-2-oxopropyl phosphate (1-amino-acetone-3-phosphate or AAP) to form pyridoxine 5'-phosphate (PNP) and inorganic phosphate. This chain is Pyridoxine 5'-phosphate synthase, found in Pseudomonas entomophila (strain L48).